Reading from the N-terminus, the 86-residue chain is Exodeoxyribonuclease 7 small subunit (86 aa).

This sequence belongs to the XseB family. Heterooligomer composed of large and small subunits.

It is found in the cytoplasm. The enzyme catalyses Exonucleolytic cleavage in either 5'- to 3'- or 3'- to 5'-direction to yield nucleoside 5'-phosphates.. In terms of biological role, bidirectionally degrades single-stranded DNA into large acid-insoluble oligonucleotides, which are then degraded further into small acid-soluble oligonucleotides. The chain is Exodeoxyribonuclease 7 small subunit from Xanthomonas axonopodis pv. citri (strain 306).